The following is a 120-amino-acid chain: cAMP-responsive element-binding protein-like 2 (120 aa).

The tract at residues 1–24 (MDDSKVVGGKVKKPGKRGRKPAKI) is disordered. Positions 10–21 (KVKKPGKRGRKP) are enriched in basic residues. Residues 23-86 (KIDLKAKLER…MAMDQGKIPS (64 aa)) enclose the bZIP domain. A basic motif region spans residues 29–60 (KLERSRQSARECRARKKLRYQYLEELVSSRER). Residues 62-69 (ICALREEL) form a leucine-zipper region. The segment at 93 to 120 (TGEEQNKSQQNSSRHTKAGKTDANSNSW) is disordered.

Belongs to the bZIP family. ATF subfamily. Interacts with CREB1; regulates CREB1 phosphorylation, stability and transcriptional activity. Post-translationally, phosphorylated by AMPK.

Its subcellular location is the nucleus. Its function is as follows. Probable regulator of CREB1 transcriptional activity which is involved in adipose cells differentiation. May also play a regulatory role in the cell cycle. Identification in a chromosomal region frequently deleted in various cancers suggests that it might act as a tumor suppressor. In Homo sapiens (Human), this protein is cAMP-responsive element-binding protein-like 2 (CREBL2).